The chain runs to 566 residues: Liver carboxylesterase 1 (566 aa).

Residues 1–18 (MWLRALVLATLAAFTAWG) form the signal peptide. An N-linked (GlcNAc...) asparagine glycan is attached at asparagine 79. Cysteine 87 and cysteine 116 are joined by a disulfide. Residue serine 221 is the Acyl-ester intermediate of the active site. Residues cysteine 274 and cysteine 285 are joined by a disulfide bond. Glutamate 354 acts as the Charge relay system in catalysis. Serine 379 carries the post-translational modification Phosphoserine. Histidine 467 functions as the Charge relay system in the catalytic mechanism.

It belongs to the type-B carboxylesterase/lipase family. As to quaternary structure, homotrimer and homohexamer. Binds to beta-glucuronidase.

Its subcellular location is the endoplasmic reticulum lumen. It is found in the cytoplasm. It localises to the lipid droplet. The enzyme catalyses a carboxylic ester + H2O = an alcohol + a carboxylate + H(+). The catalysed reaction is cholesteryl (9Z-octadecenoate) + H2O = cholesterol + (9Z)-octadecenoate + H(+). It carries out the reaction 2-(5Z,8Z,11Z,14Z-eicosatetraenoyl)-glycerol + H2O = glycerol + (5Z,8Z,11Z,14Z)-eicosatetraenoate + H(+). It catalyses the reaction prostaglandin E2 1-glyceryl ester + H2O = prostaglandin E2 + glycerol + H(+). The enzyme catalyses a cholesterol ester + H2O = cholesterol + a fatty acid + H(+). The catalysed reaction is prostaglandin F2alpha 1-glyceryl ester + H2O = prostaglandin F2alpha + glycerol + H(+). In terms of biological role, involved in the detoxification of xenobiotics and in the activation of ester and amide prodrugs. Hydrolyzes aromatic and aliphatic esters, but has no catalytic activity toward amides or a fatty acyl-CoA ester. Displays fatty acid ethyl ester synthase activity, catalyzing the ethyl esterification of oleic acid to ethyloleate. Converts monoacylglycerides to free fatty acids and glycerol. Hydrolyzes of 2-arachidonoylglycerol and prostaglandins. Hydrolyzes cellular cholesteryl esters to free cholesterols and promotes reverse cholesterol transport (RCT) by facilitating both the initial and final steps in the process. First of all, allows free cholesterol efflux from macrophages to extracellular cholesterol acceptors and secondly, releases free cholesterol from lipoprotein-delivered cholesteryl esters in the liver for bile acid synthesis or direct secretion into the bile. The chain is Liver carboxylesterase 1 from Macaca fascicularis (Crab-eating macaque).